A 99-amino-acid chain; its full sequence is Cell division topological specificity factor (99 aa).

Belongs to the MinE family.

Prevents the cell division inhibition by proteins MinC and MinD at internal division sites while permitting inhibition at polar sites. This ensures cell division at the proper site by restricting the formation of a division septum at the midpoint of the long axis of the cell. The sequence is that of Cell division topological specificity factor from Tolumonas auensis (strain DSM 9187 / NBRC 110442 / TA 4).